The chain runs to 328 residues: Zinc chaperone YeiR (328 aa).

A GTP-binding site is contributed by 9-17 (GFLGSGKTT). The CXCC motif motif lies at 63 to 66 (CMCC). Aspartate 155 provides a ligand contact to GTP. The region spanning 241-321 (CGWIFDADTV…WNALQSALLK (81 aa)) is the CobW C-terminal domain.

This sequence belongs to the SIMIBI class G3E GTPase family. ZNG1 subfamily. In terms of assembly, oligomerizes in the presence of Zn(2+).

The catalysed reaction is GTP + H2O = GDP + phosphate + H(+). GTPase activity is enhanced by Zn(2+) binding. In terms of biological role, zinc chaperone that directly transfers zinc cofactor to target proteins, thereby activating them. Zinc is transferred from the CXCC motif in the GTPase domain to the zinc binding site in target proteins in a process requiring GTP hydrolysis. The polypeptide is Zinc chaperone YeiR (yeiR) (Escherichia coli (strain K12)).